The sequence spans 406 residues: Acetate kinase (406 aa).

Asparagine 8 is a Mg(2+) binding site. Residue lysine 15 coordinates ATP. Arginine 92 contacts substrate. Aspartate 149 serves as the catalytic Proton donor/acceptor. Residues 209–213 (HLGNG), 283–285 (DFR), and 331–335 (GVGEN) each bind ATP. Residue glutamate 385 coordinates Mg(2+).

This sequence belongs to the acetokinase family. In terms of assembly, homodimer. Requires Mg(2+) as cofactor. The cofactor is Mn(2+).

It is found in the cytoplasm. The catalysed reaction is acetate + ATP = acetyl phosphate + ADP. Its pathway is metabolic intermediate biosynthesis; acetyl-CoA biosynthesis; acetyl-CoA from acetate: step 1/2. Catalyzes the formation of acetyl phosphate from acetate and ATP. Can also catalyze the reverse reaction. This Corynebacterium aurimucosum (strain ATCC 700975 / DSM 44827 / CIP 107346 / CN-1) (Corynebacterium nigricans) protein is Acetate kinase.